The sequence spans 163 residues: 2-C-methyl-D-erythritol 2,4-cyclodiphosphate synthase (163 aa).

A divalent metal cation-binding residues include Asp11 and His13. Residues 11–13 (DIH) and 37–38 (HS) each bind 4-CDP-2-C-methyl-D-erythritol 2-phosphate. His45 contacts a divalent metal cation. 4-CDP-2-C-methyl-D-erythritol 2-phosphate-binding positions include 59–61 (DIG), 64–68 (FSDTD), 103–109 (AQVPKMA), and Arg145.

It belongs to the IspF family. In terms of assembly, homotrimer. Requires a divalent metal cation as cofactor.

The catalysed reaction is 4-CDP-2-C-methyl-D-erythritol 2-phosphate = 2-C-methyl-D-erythritol 2,4-cyclic diphosphate + CMP. It functions in the pathway isoprenoid biosynthesis; isopentenyl diphosphate biosynthesis via DXP pathway; isopentenyl diphosphate from 1-deoxy-D-xylulose 5-phosphate: step 4/6. Involved in the biosynthesis of isopentenyl diphosphate (IPP) and dimethylallyl diphosphate (DMAPP), two major building blocks of isoprenoid compounds. Catalyzes the conversion of 4-diphosphocytidyl-2-C-methyl-D-erythritol 2-phosphate (CDP-ME2P) to 2-C-methyl-D-erythritol 2,4-cyclodiphosphate (ME-CPP) with a corresponding release of cytidine 5-monophosphate (CMP). In Nitrosomonas europaea (strain ATCC 19718 / CIP 103999 / KCTC 2705 / NBRC 14298), this protein is 2-C-methyl-D-erythritol 2,4-cyclodiphosphate synthase.